A 1244-amino-acid polypeptide reads, in one-letter code: MYFNNELSDQKVCLLRELKNLKYSDDARDRINFFLWELKFLDCFLHLKSFPFASECGMLHVSQKMIDIWKSHCSKTINGTILYYGKVPLNLFVNWKKVIWKTKQEFRAQYSFPKTPLAANKVIDDDDNTHSPKFVMEVIDVFVENLNVLMKINDPCSWFFVPGHMKEQIEQVLKELKLLRFFVCFVSNKCSIQPQYRCTTFYTHALIEASHIAMVVWLHLPIYGNVNQDLAPSEVSRLFSDFMEMKIKSIQPVISRNNIYIDVLQALKSTIPQAQKKHAAESSTVEIPTHSLTVGLSDQMANLQEMLCLLRDNLIHLPILDLEFHLQDMDSVIIDAGLLIYSLYDIKREKEDTVLDDMNRALGLDLPRNIEPIKVMVYLVMQKAIQCNLPKVHGLGYVDFLLKNLKDFQGRYSDSLAFLKNQLQVIQTEFESLQPFLKVVVEEPQNKLKTLNEDCAIQIIRKAHEVEYVVDACINKGIPHWCLERWLQDIIEEITCIKAKIQEKNTVDDTMKTVIARTSSKLARTPRMNEEIVGFKDVIENLRNQLLNGTKGQDVISIHGMPGLGKTTLANRLYSDRSVVSHFDICAQCCVSQVYSYKDLLLALLCDAIGEGSVRRELHANELADMLRKTLLPRRYLILVDDVWENSVWDDLRGCFPDANNRSRIILTTRHHEVAKYASVHSDPLHLRMFDEDESWKLLEKKVFGEQSCSPLLKKVGLRIAKMCGQLPLSIVLVAGILSEMEKEVECWEQVANDLGTHIRSNSRAIVDQSYHVLPCHLKSCFLYFGAFLGVREIRISRLIRLWISESFIKSCEGRRLEDIAEGYLENLIGRNLVMVTQRANSNGKVKACRLHDVLLNFCKERAAEENLLLWINRDQSTKAVYSHKQHAHLAFTKMDNLVEWSASSSLVGSVLIMRYNPYFARCPLYAVSHILLNFKFLKVLDLKHQVVIDFIPTELPYLRYLTADIGQNSIPSSISNLWNLETLILNRRSVVHKILLPSTVWDMVKLRFLFIPNFSPENKKALLKNSPNLDDLETLSYPYFARVKDAELMLRKTPNLRKLTCKVKCLEYLHQYHALNFPIRLEILKLYRSNAFKAIPFCISAPNLKYLKLSGFYLDSQYLSKTADHLKNLEVLKLYYVEFGDHREWKVSNGMFPQLKILKLEDVSLMKWIVADDAFPNLEQLVLRGCQDLMEIPSCFMDILSLQYIEVEDCNESVVKSAMNIQETQVEDYQNTNFKLVLIEVHY.

2 coiled-coil regions span residues Arg411 to Gln434 and Pro526 to Asn548. An NB-ARC domain is found at Arg527–Leu755. Gly560 to Thr567 contributes to the ATP binding site. LRR repeat units follow at residues Leu978–Met1004, Pro1079–Pro1103, Leu1127–Asn1150, Phe1153–Asn1178, and Glu1213–Leu1237.

This sequence belongs to the disease resistance NB-LRR family.

It localises to the cytoplasm. The protein resides in the membrane. Confers resistance to late blight (Phytophthora infestans) races carrying the avirulence gene Avr1. Resistance proteins guard the plant against pathogens that contain an appropriate avirulence protein via an indirect interaction with this avirulence protein. That triggers a defense system including the hypersensitive response, which restricts the pathogen growth. The polypeptide is Putative late blight resistance protein homolog R1A-4 (R1A-4) (Solanum demissum (Wild potato)).